The primary structure comprises 150 residues: Ribosomal RNA large subunit methyltransferase H (150 aa).

S-adenosyl-L-methionine is bound by residues A100 and 118–123 (LSEMTF).

Belongs to the RNA methyltransferase RlmH family. As to quaternary structure, homodimer.

Its subcellular location is the cytoplasm. It carries out the reaction pseudouridine(1915) in 23S rRNA + S-adenosyl-L-methionine = N(3)-methylpseudouridine(1915) in 23S rRNA + S-adenosyl-L-homocysteine + H(+). Functionally, specifically methylates the pseudouridine at position 1915 (m3Psi1915) in 23S rRNA. The chain is Ribosomal RNA large subunit methyltransferase H from Helicobacter pylori (strain ATCC 700392 / 26695) (Campylobacter pylori).